A 152-amino-acid polypeptide reads, in one-letter code: Deoxyuridine 5'-triphosphate nucleotidohydrolase (152 aa).

Substrate is bound by residues 71–73 (RSG), Asn84, 88–90 (LID), and Met98.

This sequence belongs to the dUTPase family. It depends on Mg(2+) as a cofactor.

The enzyme catalyses dUTP + H2O = dUMP + diphosphate + H(+). It participates in pyrimidine metabolism; dUMP biosynthesis; dUMP from dCTP (dUTP route): step 2/2. This enzyme is involved in nucleotide metabolism: it produces dUMP, the immediate precursor of thymidine nucleotides and it decreases the intracellular concentration of dUTP so that uracil cannot be incorporated into DNA. The chain is Deoxyuridine 5'-triphosphate nucleotidohydrolase from Salmonella agona (strain SL483).